Here is a 334-residue protein sequence, read N- to C-terminus: S-adenosylmethionine:tRNA ribosyltransferase-isomerase (334 aa).

This sequence belongs to the QueA family. As to quaternary structure, monomer.

It localises to the cytoplasm. The catalysed reaction is 7-aminomethyl-7-carbaguanosine(34) in tRNA + S-adenosyl-L-methionine = epoxyqueuosine(34) in tRNA + adenine + L-methionine + 2 H(+). The protein operates within tRNA modification; tRNA-queuosine biosynthesis. In terms of biological role, transfers and isomerizes the ribose moiety from AdoMet to the 7-aminomethyl group of 7-deazaguanine (preQ1-tRNA) to give epoxyqueuosine (oQ-tRNA). This chain is S-adenosylmethionine:tRNA ribosyltransferase-isomerase, found in Aquifex aeolicus (strain VF5).